The following is a 334-amino-acid chain: Galactosylgalactosylxylosylprotein 3-beta-glucuronosyltransferase 1 (334 aa).

Topologically, residues 1-6 (MPKRRD) are cytoplasmic. Residues 3–5 (KRR) form an essential for transport from endoplasmic reticulum to Golgi apparatus and interaction with SAR1A region. A helical; Signal-anchor for type II membrane protein transmembrane segment spans residues 7-27 (ILAIVLIVLPWTLLITVWHQS). At 28-334 (TLAPLLAVHK…KGFTDPSVEI (307 aa)) the chain is on the lumenal side. The interval 37–56 (KDEGSDPRRETPPGADPREY) is disordered. 91–93 (PTY) lines the UDP-alpha-D-glucuronate pocket. Phosphothreonine occurs at positions 103 and 108. Asp122 lines the UDP-alpha-D-glucuronate pocket. Residue Asn140 is glycosylated (N-linked (GlcNAc...) asparagine). The UDP-alpha-D-glucuronate site is built by Arg165 and Arg170. Asn184 carries an N-linked (GlcNAc...) asparagine glycan. 195-197 (DDD) is a UDP-alpha-D-glucuronate binding site. Residue Asp197 participates in Mn(2+) binding. Positions 245–254 (FDPHRPFAID) are interaction with galactose moiety of substrate glycoprotein. Catalysis depends on Glu284, which acts as the Proton donor/acceptor. A glycan (N-linked (GlcNAc...) asparagine) is linked at Asn303. 311–313 (HTR) is a binding site for UDP-alpha-D-glucuronate.

It belongs to the glycosyltransferase 43 family. In terms of assembly, homodimer. Interacts with SAR1A. The cofactor is Mn(2+). In terms of processing, the soluble form derives from the membrane form by proteolytic processing. As to expression, mainly expressed in the brain.

It is found in the golgi apparatus membrane. The protein localises to the secreted. It localises to the endoplasmic reticulum membrane. The enzyme catalyses 3-O-(beta-D-galactosyl-(1-&gt;3)-beta-D-galactosyl-(1-&gt;4)-beta-D-xylosyl)-L-seryl-[protein] + UDP-alpha-D-glucuronate = 3-O-(beta-D-GlcA-(1-&gt;3)-beta-D-Gal-(1-&gt;3)-beta-D-Gal-(1-&gt;4)-beta-D-Xyl)-L-seryl-[protein] + UDP + H(+). The protein operates within protein modification; protein glycosylation. Its function is as follows. Involved in the biosynthesis of L2/HNK-1 carbohydrate epitope on glycoproteins. Can also play a role in glycosaminoglycan biosynthesis. Substrates include asialo-orosomucoid (ASOR), asialo-fetuin, and asialo-neural cell adhesion molecule. Requires sphingomyelin for activity: stearoyl-sphingomyelin was the most effective, followed by palmitoyl-sphingomyelin and lignoceroyl-sphingomyelin. Activity was demonstrated only for sphingomyelin with a saturated fatty acid and not for that with an unsaturated fatty acid, regardless of the length of the acyl group. The sequence is that of Galactosylgalactosylxylosylprotein 3-beta-glucuronosyltransferase 1 from Homo sapiens (Human).